A 215-amino-acid polypeptide reads, in one-letter code: Probable phosphoglycerate mutase GpmB (215 aa).

Residues 8–15 (RHGESEWN), 21–22 (QG), Arg-58, Arg-60, 82–85 (ELHM), and 151–152 (GI) contribute to the substrate site. The active-site Tele-phosphohistidine intermediate is the His-9. The active-site Proton donor/acceptor is Glu-82.

This sequence belongs to the phosphoglycerate mutase family. GpmB subfamily.

It catalyses the reaction (2R)-2-phosphoglycerate = (2R)-3-phosphoglycerate. It participates in carbohydrate degradation; glycolysis; pyruvate from D-glyceraldehyde 3-phosphate: step 3/5. In Photorhabdus laumondii subsp. laumondii (strain DSM 15139 / CIP 105565 / TT01) (Photorhabdus luminescens subsp. laumondii), this protein is Probable phosphoglycerate mutase GpmB.